A 100-amino-acid polypeptide reads, in one-letter code: Protein RnfH (100 aa).

Belongs to the UPF0125 (RnfH) family.

This chain is Protein RnfH, found in Actinobacillus succinogenes (strain ATCC 55618 / DSM 22257 / CCUG 43843 / 130Z).